Here is a 315-residue protein sequence, read N- to C-terminus: Cytoplasmic dynein intermediate light chain DYN3 (315 aa).

The protein belongs to the dynein light intermediate chain DYN3 family. In terms of assembly, the cytoplasmic dynein is composed of at least two heavy chains and a number of intermediate and light chains.

It is found in the cytoplasm. Its subcellular location is the cytoskeleton. In terms of biological role, component of the cytoplasmic dynein which acts as a motor for the intracellular retrograde motility of vesicles and organelles along microtubules. May play an important role in the proper orientation of the mitotic spindle into the budding daughter cell yeast. Probably required for normal progression of the cell cycle. This is Cytoplasmic dynein intermediate light chain DYN3 (DYN3) from Candida glabrata (strain ATCC 2001 / BCRC 20586 / JCM 3761 / NBRC 0622 / NRRL Y-65 / CBS 138) (Yeast).